The chain runs to 429 residues: Keratin, type I cytoskeletal 20 (429 aa).

The disordered stretch occupies residues 1–26 (MDFSRRSFHRSLSSSSQGPALSTSGS). The segment at 1 to 74 (MDFSRRSFHR…SNGGDLFGGN (74 aa)) is head. Over residues 10–26 (RSLSSSSQGPALSTSGS) the composition is skewed to low complexity. Serine 13, serine 16, and serine 26 each carry phosphoserine. The tract at residues 75–110 (EKLAMQNLNDRLASYLEKVRSLEQSNSKLEAQIKQW) is coil 1A. The IF rod domain occupies 75-386 (EKLAMQNLND…RLLEGEDIKT (312 aa)). Residues 111–128 (YETNAPSTIRDYSSYYAQ) are linker 1. The tract at residues 129–220 (IKELQDQIKD…KEHQEEVEVL (92 aa)) is coil 1B. The linker 12 stretch occupies residues 221–243 (RRQLGNNVNVEVDAAPGLNLGEI). Positions 244–382 (MNEMRQKYEI…ATYRRLLEGE (139 aa)) are coil 2. The tail stretch occupies residues 383–429 (DIKTTEYQLNTLEAKDIKKTRKIKTVVEEVVDGKVVSSEVKEIEENI).

Belongs to the intermediate filament family. Heterotetramer of two type I and two type II keratins. Associates with KRT8. Hyperphosphorylation at Ser-13 occurs during the early stages of apoptosis but becomes less prominent during the later stages. Phosphorylation at Ser-13 also increases in response to stress brought on by cell injury. Post-translationally, proteolytically cleaved by caspases during apoptosis. Cleavage occurs at Asp-233. Expressed predominantly in the intestinal epithelium in differentiated villus cells.

Functionally, plays a significant role in maintaining keratin filament organization in intestinal epithelia. When phosphorylated, plays a role in the secretion of mucin in the small intestine. This chain is Keratin, type I cytoskeletal 20 (Krt20), found in Rattus norvegicus (Rat).